The chain runs to 319 residues: Ankyrin repeat domain-containing protein 1 (319 aa).

The stretch at 63-89 (EKEREAELKKKKLEQRSKLENLEDLEI) forms a coiled coil. ANK repeat units follow at residues 152–181 (YKRT…QIEF), 185–214 (LEST…KISA), 218–247 (LLST…DLNA), 251–280 (EGDT…DLNV), and 284–315 (AGKT…KASR).

Interacts with TTN/titin and YBX1. In terms of tissue distribution, expressed in heart. In postnatal neonatal heart, it is expressed in an asymmetrical way; left ventricle favored towards right ventricle. Whether or not this could be correlated with a hypertrophic heart is still a matter of debate. Levels increase gradually from newborn to adult.

Its subcellular location is the nucleus. In terms of biological role, may play an important role in endothelial cell activation. May act as a nuclear transcription factor that negatively regulates the expression of cardiac genes. This is Ankyrin repeat domain-containing protein 1 (ANKRD1) from Sus scrofa (Pig).